Reading from the N-terminus, the 242-residue chain is 1-(5-phosphoribosyl)-5-[(5-phosphoribosylamino)methylideneamino] imidazole-4-carboxamide isomerase (242 aa).

Aspartate 8 serves as the catalytic Proton acceptor. Aspartate 129 acts as the Proton donor in catalysis.

It belongs to the HisA/HisF family.

It localises to the cytoplasm. It catalyses the reaction 1-(5-phospho-beta-D-ribosyl)-5-[(5-phospho-beta-D-ribosylamino)methylideneamino]imidazole-4-carboxamide = 5-[(5-phospho-1-deoxy-D-ribulos-1-ylimino)methylamino]-1-(5-phospho-beta-D-ribosyl)imidazole-4-carboxamide. It participates in amino-acid biosynthesis; L-histidine biosynthesis; L-histidine from 5-phospho-alpha-D-ribose 1-diphosphate: step 4/9. The protein is 1-(5-phosphoribosyl)-5-[(5-phosphoribosylamino)methylideneamino] imidazole-4-carboxamide isomerase of Beijerinckia indica subsp. indica (strain ATCC 9039 / DSM 1715 / NCIMB 8712).